We begin with the raw amino-acid sequence, 572 residues long: Phosphoenolpyruvate-protein phosphotransferase (572 aa).

The active-site Tele-phosphohistidine intermediate is the His-190. Arg-297 and Arg-333 together coordinate phosphoenolpyruvate. Glu-432 and Asp-456 together coordinate Mg(2+). Phosphoenolpyruvate is bound by residues 455–456 and Arg-466; that span reads ND. The active-site Proton donor is the Cys-503.

It belongs to the PEP-utilizing enzyme family. Homodimer. Requires Mg(2+) as cofactor.

It localises to the cytoplasm. The catalysed reaction is L-histidyl-[protein] + phosphoenolpyruvate = N(pros)-phospho-L-histidyl-[protein] + pyruvate. Its function is as follows. General (non sugar-specific) component of the phosphoenolpyruvate-dependent sugar phosphotransferase system (sugar PTS). This major carbohydrate active-transport system catalyzes the phosphorylation of incoming sugar substrates concomitantly with their translocation across the cell membrane. Enzyme I transfers the phosphoryl group from phosphoenolpyruvate (PEP) to the phosphoryl carrier protein (HPr). This is Phosphoenolpyruvate-protein phosphotransferase (ptsI) from Listeria innocua serovar 6a (strain ATCC BAA-680 / CLIP 11262).